A 1734-amino-acid chain; its full sequence is Complement C4-A (1734 aa).

A signal peptide spans 1–19 (MRLLWGLAWVFSFCASSLQ). Cys-66 and Cys-95 are joined by a disulfide. An N-linked (GlcNAc...) asparagine glycan is attached at Asn-224. A disulfide bridge connects residues Cys-633 and Cys-667. A propeptide spanning residues 674-677 (RQKR) is cleaved from the precursor. 3 cysteine pairs are disulfide-bonded: Cys-700–Cys-726, Cys-701–Cys-733, and Cys-714–Cys-734. Positions 700 to 734 (CCQDGMTKLPMKRTCEQRAARVPQQACREPFLSCC) constitute an Anaphylatoxin-like domain. N-linked (GlcNAc...) asparagine glycans are attached at residues Asn-743 and Asn-859. Positions 1002–1005 (CAEQ) form a cross-link, isoglutamyl cysteine thioester (Cys-Gln). Residues Asn-1128 and Asn-1383 are each glycosylated (N-linked (GlcNAc...) asparagine). Tyr-1409 is subject to Sulfotyrosine. Positions 1437 to 1443 (RRSRRRR) are excised as a propeptide. 5 disulfides stabilise this stretch: Cys-1461–Cys-1525, Cys-1573–Cys-1578, Cys-1585–Cys-1663, Cys-1608–Cys-1732, and Cys-1708–Cys-1717. Positions 1585-1732 (CPRLLRSLER…FLMEFSSRGC (148 aa)) constitute an NTR domain.

As to quaternary structure, in absence of complement activation, circulates in blood as a disulfide-linked trimer of an alpha, beta and gamma chain. In terms of assembly, complement C4b is composed of Complement C4b-A, Complement C4 beta and Complement C4 gamma chains that are associated via disulfide bonds. Non-enzymatic component of the C3 convertase, also named C4bC2b, composed of the serine protease complement C2b (C2), as well as complement C4b. Non-enzymatic component of the C5 convertase, also named C4bC2bC3b, composed of the serine protease complement C2b (C2), complement C3b, as well as complement C4b. Prior to secretion, the single-chain precursor is enzymatically cleaved by plasminogen (PLG) to yield non-identical chains alpha, beta and gamma. During activation of the complement systems, the alpha chain is cleaved into C4a and C4b by different proteases depending on the complement pathway: C4b stays linked to the beta and gamma chains, while C4a is released in the plasma. The alpha chain is cleaved by C1S to generate C4a and C4b following activation by the classical complement system. The alpha chain is cleaved to generate C4a and C4b by MASP2 following activation by the lectin complement system. The alpha chain is cleaved by GZMK to generate C4a and C4b following activation by the GZMK complement system. Further degradation of C4b by C1 into the inactive fragments C4c and C4d blocks the generation of C3 convertase. The proteolytic cleavages often are incomplete so that many structural forms can be found in plasma. Post-translationally, upon activation, the internal thioester bond reacts with carbohydrate antigens on the target surface to form amide or ester bonds, leading to covalent association with the surface of pathogens. In terms of processing, complement C4b interacts with complement C3b via a thioester linkage. N- and O-glycosylated. O-glycosylated with a core 1 or possibly core 8 glycan.

The protein localises to the secreted. It is found in the synapse. The protein resides in the cell projection. It localises to the axon. Its subcellular location is the dendrite. The protein localises to the cell surface. Its activity is regulated as follows. Specifically inhibited by nanobody hC4Nb8, inhibiting the classical complement pathway. Functionally, precursor of non-enzymatic components of the classical, lectin and GZMK complement pathways, which consist in a cascade of proteins that leads to phagocytosis and breakdown of pathogens and signaling that strengthens the adaptive immune system. In terms of biological role, non-enzymatic component of C3 and C5 convertases. Generated following cleavage by complement proteases (C1S, MASP2 or GZMK, depending on the complement pathway), it covalently attaches to the surface of pathogens, where it acts as an opsonin that marks the surface of antigens for removal. It then recruits the serine protease complement C2b to form the C3 and C5 convertases, which cleave and activate C3 and C5, respectively, the next components of the complement pathways. Complement C4b-A isotype is responsible for effective binding to form amide bonds with immune aggregates or protein antigens, while complement C4b-B isotype catalyzes the transacylation of the thioester carbonyl group to form ester bonds with carbohydrate antigens. Its function is as follows. Putative humoral mediator released following cleavage by complement proteases (C1S, MASP2 or GZMK, depending on the complement pathway). While it is strongly similar to anaphylatoxins, its role is unclear. Was reported to act as a mediator of local inflammatory process; however these effects were probably due to contamination with C3a and/C5a anaphylatoxins in biological assays. This is Complement C4-A from Mus musculus (Mouse).